The following is a 436-amino-acid chain: Hydrogenobyrinate a,c-diamide synthase (436 aa).

One can recognise a GATase cobBQ-type domain in the interval 244–435 (RIAVARDDAF…MHVIDFSGEA (192 aa)). Cys-327 functions as the Nucleophile in the catalytic mechanism.

It belongs to the CobB/CbiA family. Mg(2+) is required as a cofactor.

It carries out the reaction hydrogenobyrinate + 2 L-glutamine + 2 ATP + 2 H2O = hydrogenobyrinate a,c-diamide + 2 L-glutamate + 2 ADP + 2 phosphate + 2 H(+). It participates in cofactor biosynthesis; adenosylcobalamin biosynthesis; cob(II)yrinate a,c-diamide from precorrin-2 (aerobic route): step 9/10. Its function is as follows. Catalyzes the ATP-dependent amidation of the two carboxylate groups at positions a and c of hydrogenobyrinate, using either L-glutamine or ammonia as the nitrogen source. The polypeptide is Hydrogenobyrinate a,c-diamide synthase (Brucella abortus biovar 1 (strain 9-941)).